An 82-amino-acid polypeptide reads, in one-letter code: Cytochrome c-551 (82 aa).

Heme c contacts are provided by C12, C15, H16, and M61.

Post-translationally, binds 1 heme c group covalently per subunit.

The polypeptide is Cytochrome c-551 (Azotobacter vinelandii).